Reading from the N-terminus, the 170-residue chain is Protein SprT (170 aa).

One can recognise a SprT-like domain in the interval 22–165 (LQLANQHLGT…RQCGEKLQFI (144 aa)). His78 provides a ligand contact to Zn(2+). Glu79 is an active-site residue. His82 contributes to the Zn(2+) binding site.

This sequence belongs to the SprT family. Zn(2+) is required as a cofactor.

It localises to the cytoplasm. The polypeptide is Protein SprT (Yersinia pseudotuberculosis serotype IB (strain PB1/+)).